A 583-amino-acid polypeptide reads, in one-letter code: Cationic amino acid transporter 6, chloroplastic (583 aa).

The N-terminal 50 residues, 1–50 (MEVQSSSNNGGHSSFSSLRVYLNSLSATPSRLSRRAISVSTSSDEMSRVR), are a transit peptide targeting the chloroplast. 14 consecutive transmembrane segments (helical) span residues 63–83 (WYDL…FVTT), 91–111 (AGPS…LSAF), 132–152 (ITFG…DYVM), 186–206 (GFNE…VIIC), 216–236 (NMIM…MGFI), 255–275 (FFPF…LSYI), 294–314 (IPVG…LMAV), 347–367 (VVGI…MLGQ), 397–417 (ASTF…LNVL), 418–438 (LNLV…ALIF), 450–470 (WPTL…TLIW), 481–501 (FMLG…QCVV), 509–529 (LWGV…NIFL), and 541–561 (FGFF…HASS).

It belongs to the amino acid-polyamine-organocation (APC) superfamily. Cationic amino acid transporter (CAT) (TC 2.A.3.3) family. As to expression, expressed in roots, stems, flowers, and leaves.

The protein resides in the plastid. It localises to the chloroplast membrane. Its function is as follows. Permease involved in the transport of the cationic neutral or acidic amino acids. The sequence is that of Cationic amino acid transporter 6, chloroplastic (CAT6) from Arabidopsis thaliana (Mouse-ear cress).